The primary structure comprises 341 residues: THO complex subunit 6 homolog (341 aa).

WD repeat units lie at residues Arg22–Ala61, Ala74–Glu112, Leu124–Ala163, Gly166–Thr205, Ser215–Val254, Pro256–Val293, and Gly295–Leu339. Ser180 is subject to Phosphoserine.

Belongs to the WD repeat THOC6 family. Component of the THO subcomplex, which is composed of THOC1, THOC2, THOC3, THOC5, THOC6 and THOC7. The THO subcomplex interacts with DDX39B to form the THO-DDX39B complex which multimerizes into a 28-subunit tetrameric assembly. Component of the transcription/export (TREX) complex at least composed of ALYREF/THOC4, DDX39B, SARNP/CIP29, CHTOP and the THO subcomplex; in the complex interacts with THOC5; together with THOC5 and THOC7, plays a key structural role in the oligomerization of the THO-DDX39B complex. TREX seems to have a dynamic structure involving ATP-dependent remodeling.

It localises to the nucleus. Its subcellular location is the nucleus speckle. In terms of biological role, component of the THO subcomplex of the TREX complex which is thought to couple mRNA transcription, processing and nuclear export, and which specifically associates with spliced mRNA and not with unspliced pre-mRNA. Plays a key structural role in the oligomerization of the THO-DDX39B complex. TREX is recruited to spliced mRNAs by a transcription-independent mechanism, binds to mRNA upstream of the exon-junction complex (EJC) and is recruited in a splicing- and cap-dependent manner to a region near the 5' end of the mRNA where it functions in mRNA export to the cytoplasm via the TAP/NXF1 pathway. Plays a role in apoptosis negative control involved in brain development. This chain is THO complex subunit 6 homolog (Thoc6), found in Rattus norvegicus (Rat).